The following is a 392-amino-acid chain: ATP phosphoribosyltransferase regulatory subunit (392 aa).

Belongs to the class-II aminoacyl-tRNA synthetase family. HisZ subfamily. As to quaternary structure, heteromultimer composed of HisG and HisZ subunits.

It is found in the cytoplasm. It functions in the pathway amino-acid biosynthesis; L-histidine biosynthesis; L-histidine from 5-phospho-alpha-D-ribose 1-diphosphate: step 1/9. In terms of biological role, required for the first step of histidine biosynthesis. May allow the feedback regulation of ATP phosphoribosyltransferase activity by histidine. The chain is ATP phosphoribosyltransferase regulatory subunit from Prochlorococcus marinus (strain MIT 9313).